The sequence spans 740 residues: DNA polymerase iota (740 aa).

The tract at residues 1–21 is disordered; sequence MEKLGVEPEEEGGGDDDEEDA. Over residues 7 to 21 the composition is skewed to acidic residues; that stretch reads EPEEEGGGDDDEEDA. The region spanning 55-268 is the UmuC domain; that stretch reads IVHVDLDCFY…NHIKEIPGIG (214 aa). Mg(2+) contacts are provided by Asp59 and Leu60. Residues Asp59 and Leu60 each coordinate Mn(2+). Positions 64 and 96 each coordinate a 2'-deoxyribonucleoside 5'-triphosphate. Mg(2+) is bound at residue Asp151. Mn(2+) is bound at residue Asp151. The active-site Proton acceptor is Glu152. DNA-binding stretches follow at residues 249–314 and 325–439; these read ESCQ…FGED and QSFS…CNLK. The short motif at 527–544 is the Ubiquitin-binding 1 (UBM1) element; the sequence is VDQEVFKQLPVDIQEEIL. Disordered regions lie at residues 581-615 and 671-704; these read PINP…SSYM and NHTT…KITF. Positions 605–615 are enriched in low complexity; sequence SGFNSSSSSYM. Residues 672–702 are compositionally biased toward basic and acidic residues; it reads HTTDSHKQTVATDSHEGLTENREPDSVDEKI. The short motif at 708 to 725 is the Ubiquitin-binding 2 (UBM2) element; the sequence is IDPQVFYELPEAVQKELL.

Belongs to the DNA polymerase type-Y family. As to quaternary structure, interacts with POLH. Interacts with REV1. Interacts with ubiquitin. Mg(2+) is required as a cofactor. The cofactor is Mn(2+). Monoubiquitinated. Protein monoubiquitination prevents POLI binding to ubiquitin via the ubiquitin-binding motif 1 and ubiquitin-binding motif 2. Ubiquitous. Highly expressed in testis.

The protein resides in the nucleus. The catalysed reaction is DNA(n) + a 2'-deoxyribonucleoside 5'-triphosphate = DNA(n+1) + diphosphate. In terms of biological role, error-prone DNA polymerase specifically involved in DNA repair. Plays an important role in translesion synthesis, where the normal high-fidelity DNA polymerases cannot proceed and DNA synthesis stalls. Favors Hoogsteen base-pairing in the active site. Inserts the correct base with high-fidelity opposite an adenosine template. Exhibits low fidelity and efficiency opposite a thymidine template, where it will preferentially insert guanosine. May play a role in hypermutation of immunoglobulin genes. Forms a Schiff base with 5'-deoxyribose phosphate at abasic sites, but may not have lyase activity. The chain is DNA polymerase iota (POLI) from Homo sapiens (Human).